The following is a 64-amino-acid chain: Large ribosomal subunit protein uL30 (64 aa).

Belongs to the universal ribosomal protein uL30 family. Part of the 50S ribosomal subunit.

This Beijerinckia indica subsp. indica (strain ATCC 9039 / DSM 1715 / NCIMB 8712) protein is Large ribosomal subunit protein uL30.